The sequence spans 103 residues: Large ribosomal subunit protein bL21 (103 aa).

The protein belongs to the bacterial ribosomal protein bL21 family. Part of the 50S ribosomal subunit. Contacts protein L20.

This protein binds to 23S rRNA in the presence of protein L20. This Borreliella burgdorferi (strain ZS7) (Borrelia burgdorferi) protein is Large ribosomal subunit protein bL21.